Here is a 101-residue protein sequence, read N- to C-terminus: Small ribosomal subunit protein uS14 (101 aa).

The tract at residues 1-26 is disordered; it reads MAKVSSIQKNKSRQKKSQSLHNKRSE. Over residues 10–22 the composition is skewed to basic residues; it reads NKSRQKKSQSLHN.

It belongs to the universal ribosomal protein uS14 family. As to quaternary structure, part of the 30S ribosomal subunit. Contacts proteins S3 and S10.

In terms of biological role, binds 16S rRNA, required for the assembly of 30S particles and may also be responsible for determining the conformation of the 16S rRNA at the A site. This chain is Small ribosomal subunit protein uS14, found in Rickettsia prowazekii (strain Madrid E).